We begin with the raw amino-acid sequence, 776 residues long: Endonuclease MutS2 (776 aa).

330–337 (GPNTGGKT) provides a ligand contact to ATP. In terms of domain architecture, Smr spans 701-776 (LDLRGMRYEE…GSGATIAILK (76 aa)).

Belongs to the DNA mismatch repair MutS family. MutS2 subfamily. As to quaternary structure, homodimer. Binds to stalled ribosomes, contacting rRNA.

In terms of biological role, endonuclease that is involved in the suppression of homologous recombination and thus may have a key role in the control of bacterial genetic diversity. Functionally, acts as a ribosome collision sensor, splitting the ribosome into its 2 subunits. Detects stalled/collided 70S ribosomes which it binds and splits by an ATP-hydrolysis driven conformational change. Acts upstream of the ribosome quality control system (RQC), a ribosome-associated complex that mediates the extraction of incompletely synthesized nascent chains from stalled ribosomes and their subsequent degradation. Probably generates substrates for RQC. This Lactococcus lactis subsp. lactis (strain IL1403) (Streptococcus lactis) protein is Endonuclease MutS2.